Here is a 738-residue protein sequence, read N- to C-terminus: Adhesion G protein-coupled receptor L4 (738 aa).

A signal peptide spans 1–19; sequence MRLLLLLVGLSTLLNHSYT. The EGF-like 1 domain maps to 20 to 56; the sequence is QNCKTPCLPNAKCEVLDEVAACFCSTGYTGNGITICE. The Extracellular segment spans residues 20 to 480; sequence QNCKTPCLPN…DYNILTRITQ (461 aa). Intrachain disulfides connect Cys22/Cys32, Cys26/Cys41, Cys43/Cys55, Cys61/Cys73, Cys67/Cys82, Cys84/Cys105, Cys111/Cys123, Cys117/Cys132, and Cys134/Cys155. Residues 57-106 enclose the EGF-like 2; calcium-binding domain; sequence DVDECNETSVCGDHAVCENTNGGFSCFCVEGYQTSTGKTQFTPNDGSYCQ. N-linked (GlcNAc...) asparagine glycosylation occurs at Asn62. An EGF-like 3; calcium-binding domain is found at 107 to 156; sequence DVDECNETSVCGDHAVCENTNGGFSCFCVEGYQTSTGKTQFTPNDGSYCQ. N-linked (GlcNAc...) asparagine glycosylation is present at Asn112. 6 N-linked (GlcNAc...) asparagine glycosylation sites follow: Asn175, Asn226, Asn297, Asn421, Asn429, and Asn443. The GAIN-B domain maps to 292 to 467; it reads TQFDMNSTDL…AILMSPSTSI (176 aa). 2 cysteine pairs are disulfide-bonded: Cys417–Cys449 and Cys437–Cys451. Residues 417-467 are GPS; the sequence is CAFWNYSVDDMNNGSWSSEGCELTYSNDTHTSCRCSHLTHFAILMSPSTSI. A helical transmembrane segment spans residues 481–501; sequence LGIIISLICLAICIFTFWFFS. The Cytoplasmic segment spans residues 502 to 522; it reads EIQSTRTTIHKNLCCSLFLAQ. The helical transmembrane segment at 523-543 threads the bilayer; that stretch reads LVFLVGININTNKLVCSIIAG. The Extracellular segment spans residues 544-547; sequence LLHY. A helical membrane pass occupies residues 548–568; it reads FFLAAFAWMCIEGIYLYLIVV. At 569–580 the chain is on the cytoplasmic side; that stretch reads GLIYNKGFLHKN. Residues 581–601 form a helical membrane-spanning segment; the sequence is FYIFGYLSPAVVVGFSASLGY. The Extracellular portion of the chain corresponds to 602–621; sequence RYYGTTKVCWLSTENNFIWS. Residues 622–642 traverse the membrane as a helical segment; sequence FIGPACLIILVNLLAFGVIIY. Over 643-666 the chain is Cytoplasmic; that stretch reads KVFRHTAGLKPEVSCYENIRSCAR. The chain crosses the membrane as a helical span at residues 667–687; that stretch reads GALALLFLLGTTWTFGVLHVV. Over 688–694 the chain is Extracellular; the sequence is HASVVTA. The helical transmembrane segment at 695–715 threads the bilayer; that stretch reads YLFTVSNAFQGMFIFLFLCVL. Topologically, residues 716–738 are cytoplasmic; it reads SRKIQEEYYRLFKNVPCCFECLR.

It belongs to the G-protein coupled receptor 2 family. Adhesion G-protein coupled receptor (ADGR) subfamily. Heterodimer of 2 chains generated by proteolytic processing; the large extracellular N-terminal fragment and the membrane-bound C-terminal fragment predominantly remain associated and non-covalently linked. In terms of processing, proteolytically cleaved into 2 subunits, an extracellular alpha subunit and a seven-transmembrane subunit. Post-translationally, glycosylated. As to expression, abundantly expressed in heart, lung, and kidney. Less evident expression is observed in brain, skeletal muscle, liver and spleen. No expression is detected in testis.

It is found in the cell membrane. In terms of biological role, endothelial orphan receptor that acts as a key regulator of angiogenesis. The sequence is that of Adhesion G protein-coupled receptor L4 (Adgrl4) from Rattus norvegicus (Rat).